The chain runs to 428 residues: Serine--tRNA ligase (428 aa).

235-237 contacts L-serine; sequence TAE. 266-268 contacts ATP; it reads RSE. Position 289 (Glu-289) interacts with L-serine. Residue 353-356 coordinates ATP; the sequence is EISS. Ser-389 is a binding site for L-serine.

This sequence belongs to the class-II aminoacyl-tRNA synthetase family. Type-1 seryl-tRNA synthetase subfamily. As to quaternary structure, homodimer. The tRNA molecule binds across the dimer.

It localises to the cytoplasm. It catalyses the reaction tRNA(Ser) + L-serine + ATP = L-seryl-tRNA(Ser) + AMP + diphosphate + H(+). It carries out the reaction tRNA(Sec) + L-serine + ATP = L-seryl-tRNA(Sec) + AMP + diphosphate + H(+). It participates in aminoacyl-tRNA biosynthesis; selenocysteinyl-tRNA(Sec) biosynthesis; L-seryl-tRNA(Sec) from L-serine and tRNA(Sec): step 1/1. Functionally, catalyzes the attachment of serine to tRNA(Ser). Is also able to aminoacylate tRNA(Sec) with serine, to form the misacylated tRNA L-seryl-tRNA(Sec), which will be further converted into selenocysteinyl-tRNA(Sec). This chain is Serine--tRNA ligase, found in Shewanella halifaxensis (strain HAW-EB4).